Consider the following 256-residue polypeptide: Glutamate racemase (256 aa).

Residues 11-12 (DS) and 43-44 (YG) contribute to the substrate site. The Proton donor/acceptor role is filled by cysteine 74. 75–76 (NT) is a binding site for substrate. The active-site Proton donor/acceptor is cysteine 182. 183–184 (TH) contacts substrate.

Belongs to the aspartate/glutamate racemases family.

It catalyses the reaction L-glutamate = D-glutamate. It functions in the pathway cell wall biogenesis; peptidoglycan biosynthesis. Its function is as follows. Provides the (R)-glutamate required for cell wall biosynthesis. In Leptospira interrogans serogroup Icterohaemorrhagiae serovar Lai (strain 56601), this protein is Glutamate racemase.